A 309-amino-acid chain; its full sequence is Mitochondrial brown fat uncoupling protein 1 (309 aa).

Residues V2–P10 lie on the Mitochondrial intermembrane side of the membrane. The chain crosses the membrane as a helical span at residues P11–F32. 3 Solcar repeats span residues P11–F106, A113–A203, and D212–E297. Topologically, residues P33–K77 are mitochondrial matrix. K60 contributes to the fatty acid 16:0 binding site. A helical membrane pass occupies residues L78 to Y100. The Mitochondrial intermembrane segment spans residues D101 to K118. The helical transmembrane segment at I119–P135 threads the bilayer. The Mitochondrial matrix segment spans residues T136–T180. Residues P181–Y197 form a helical membrane-spanning segment. The Mitochondrial intermembrane portion of the chain corresponds to D198–V214. Residues P215–P234 traverse the membrane as a helical segment. The Mitochondrial matrix portion of the chain corresponds to V235–A268. A Cysteine sulfenic acid (-SOH) modification is found at C256. Residues F269 to F291 form a helical membrane-spanning segment. K271 is a fatty acid 16:0 binding site. Residues E292–T309 lie on the Mitochondrial intermembrane side of the membrane.

Belongs to the mitochondrial carrier (TC 2.A.29) family. Most probably functions as a monomer. Binds one purine nucleotide per monomer. However, has also been suggested to function as a homodimer or a homotetramer. Tightly associates with cardiolipin in the mitochondrion inner membrane; may stabilize and regulate its activity. Post-translationally, may undergo sulfenylation upon cold exposure. May increase the sensitivity of UCP1 thermogenic function to the activation by noradrenaline probably through structural effects. May undergo ubiquitin-mediated proteasomal degradation.

It is found in the mitochondrion inner membrane. The catalysed reaction is H(+)(in) = H(+)(out). Has no constitutive proton transporter activity and has to be activated by long-chain fatty acids/LCFAs. Inhibited by purine nucleotides. Both purine nucleotides and LCFAs bind the cytosolic side of the transporter and directly compete to activate or inhibit it. Activated by noradrenaline and reactive oxygen species. Despite lacking canonical translational encoding for selenocysteine, a small pool of the protein has been observed to selectively incorporate selenocysteine at 'Cys-256'. Selenocysteine-modified protein is highly sensitive to redox modification and may constitute a pool of protein highly sensitive to activation by elevated levels of reactive oxygen species (ROS). Functionally, mitochondrial protein responsible for thermogenic respiration, a specialized capacity of brown adipose tissue and beige fat that participates in non-shivering adaptive thermogenesis to temperature and diet variations and more generally to the regulation of energy balance. Functions as a long-chain fatty acid/LCFA and proton symporter, simultaneously transporting one LCFA and one proton through the inner mitochondrial membrane. However, LCFAs remaining associated with the transporter via their hydrophobic tails, it results in an apparent transport of protons activated by LCFAs. Thereby, dissipates the mitochondrial proton gradient and converts the energy of substrate oxydation into heat instead of ATP. Regulates the production of reactive oxygen species/ROS by mitochondria. This Bos taurus (Bovine) protein is Mitochondrial brown fat uncoupling protein 1.